Consider the following 467-residue polypeptide: tRNA-2-methylthio-N(6)-dimethylallyladenosine synthase (467 aa).

The MTTase N-terminal domain maps to 4–124 (RKLFIKSYGC…LPEMVAKVER (121 aa)). Positions 13, 49, 87, 161, 165, and 168 each coordinate [4Fe-4S] cluster. The Radical SAM core domain occupies 147 to 379 (QAHGPSAFLS…QARLVEIQQA (233 aa)). One can recognise a TRAM domain in the interval 382 to 444 (QACVGRPMDV…SNSLAARLVE (63 aa)).

It belongs to the methylthiotransferase family. MiaB subfamily. Monomer. [4Fe-4S] cluster serves as cofactor.

It is found in the cytoplasm. The enzyme catalyses N(6)-dimethylallyladenosine(37) in tRNA + (sulfur carrier)-SH + AH2 + 2 S-adenosyl-L-methionine = 2-methylsulfanyl-N(6)-dimethylallyladenosine(37) in tRNA + (sulfur carrier)-H + 5'-deoxyadenosine + L-methionine + A + S-adenosyl-L-homocysteine + 2 H(+). Catalyzes the methylthiolation of N6-(dimethylallyl)adenosine (i(6)A), leading to the formation of 2-methylthio-N6-(dimethylallyl)adenosine (ms(2)i(6)A) at position 37 in tRNAs that read codons beginning with uridine. The protein is tRNA-2-methylthio-N(6)-dimethylallyladenosine synthase of Rhodospirillum rubrum (strain ATCC 11170 / ATH 1.1.1 / DSM 467 / LMG 4362 / NCIMB 8255 / S1).